The following is a 146-amino-acid chain: MRLHDLRPVPGSRQKPTRKGQGIGSGLGKTAGRGQKGQKARSGGGVRPGFEGGQMPLYRRLPKRGFHNKFAKEIIAINVDRLNKFEDGTVVTPELLLETGIIKKIGDGVKILGGGELKKALTVKAHAFSESAKEKITAAGGQAEVL.

Positions 1 to 56 (MRLHDLRPVPGSRQKPTRKGQGIGSGLGKTAGRGQKGQKARSGGGVRPGFEGGQMP) are disordered. 2 stretches are compositionally biased toward gly residues: residues 21-35 (QGIGSGLGKTAGRGQ) and 42-52 (SGGGVRPGFEG).

This sequence belongs to the universal ribosomal protein uL15 family. As to quaternary structure, part of the 50S ribosomal subunit.

In terms of biological role, binds to the 23S rRNA. This Carboxydothermus hydrogenoformans (strain ATCC BAA-161 / DSM 6008 / Z-2901) protein is Large ribosomal subunit protein uL15.